Here is a 128-residue protein sequence, read N- to C-terminus: MQKRVRNRLITIIICFCSACLGISIILYNLEKNIVFFLPPSKINEIEQGKELRVGGLVKTDSINKIADDKISFVITDNIKDFEILYQGTLPTLFRKGQGIIAIGQLSNGKFIARQLLAKHDENYRPPQ.

Topologically, residues 1 to 8 (MQKRVRNR) are cytoplasmic. The helical; Signal-anchor for type II membrane protein transmembrane segment at 9 to 29 (LITIIICFCSACLGISIILYN) threads the bilayer. Residues 30 to 128 (LEKNIVFFLP…KHDENYRPPQ (99 aa)) are Extracellular-facing. Heme-binding residues include H120 and Y124.

Belongs to the CcmE/CycJ family.

It is found in the cell membrane. Functionally, heme chaperone required for the biogenesis of c-type cytochromes. Transiently binds heme delivered by CcmC and transfers the heme to apo-cytochromes in a process facilitated by CcmF and CcmH. This Rickettsia africae (strain ESF-5) protein is Cytochrome c-type biogenesis protein CcmE.